The following is a 231-amino-acid chain: Lipid A acyltransferase PagP (231 aa).

An N-terminal signal peptide occupies residues 1–23 (MNKLTVRNFIVGLLIVFSLNSFS). Residues 24–43 (SPPSISNSSSNSIDENSPIN) show a composition bias toward low complexity. The disordered stretch occupies residues 24–59 (SPPSISNSSSNSIDENSPINTFKISPDNQTSKKSDL). Residues histidine 100, aspartate 145, and serine 146 contribute to the active site.

The protein belongs to the lipid A palmitoyltransferase family. As to quaternary structure, homodimer.

The protein resides in the cell outer membrane. It carries out the reaction a lipid A + a 1,2-diacyl-sn-glycero-3-phosphocholine = a hepta-acyl lipid A + a 2-acyl-sn-glycero-3-phosphocholine. The enzyme catalyses a lipid IVA + a 1,2-diacyl-sn-glycero-3-phosphocholine = a lipid IVB + a 2-acyl-sn-glycero-3-phosphocholine. It catalyses the reaction a lipid IIA + a 1,2-diacyl-sn-glycero-3-phosphocholine = a lipid IIB + a 2-acyl-sn-glycero-3-phosphocholine. Transfers a fatty acid residue from the sn-1 position of a phospholipid to the N-linked hydroxyfatty acid chain on the proximal unit of lipid A or its precursors. In Legionella longbeachae serogroup 1 (strain NSW150), this protein is Lipid A acyltransferase PagP.